The chain runs to 176 residues: Probable RNA-binding protein EIF1AD (176 aa).

The 85-residue stretch at T5–D89 folds into the S1-like domain. Over residues A117–D128 the composition is skewed to basic and acidic residues. The tract at residues A117–K176 is disordered. Over residues D129–D164 the composition is skewed to acidic residues. The segment covering Y166–K176 has biased composition (polar residues).

The protein belongs to the EIF1AD family.

The polypeptide is Probable RNA-binding protein EIF1AD (Caenorhabditis briggsae).